The chain runs to 96 residues: NADH-ubiquinone oxidoreductase chain 4L (96 aa).

3 consecutive transmembrane segments (helical) span residues 1 to 21, 27 to 47, and 57 to 77; these read MPTT…SLQR, LLLT…LWAL, and APLI…SLMI.

Belongs to the complex I subunit 4L family.

Its subcellular location is the mitochondrion membrane. The catalysed reaction is a ubiquinone + NADH + 5 H(+)(in) = a ubiquinol + NAD(+) + 4 H(+)(out). Functionally, core subunit of the mitochondrial membrane respiratory chain NADH dehydrogenase (Complex I) which catalyzes electron transfer from NADH through the respiratory chain, using ubiquinone as an electron acceptor. Part of the enzyme membrane arm which is embedded in the lipid bilayer and involved in proton translocation. The protein is NADH-ubiquinone oxidoreductase chain 4L (MT-ND4L) of Petromyzon marinus (Sea lamprey).